The chain runs to 97 residues: Co-chaperonin GroES (97 aa).

The protein belongs to the GroES chaperonin family. Heptamer of 7 subunits arranged in a ring. Interacts with the chaperonin GroEL.

It is found in the cytoplasm. Its function is as follows. Together with the chaperonin GroEL, plays an essential role in assisting protein folding. The GroEL-GroES system forms a nano-cage that allows encapsulation of the non-native substrate proteins and provides a physical environment optimized to promote and accelerate protein folding. GroES binds to the apical surface of the GroEL ring, thereby capping the opening of the GroEL channel. The polypeptide is Co-chaperonin GroES (Aeromonas hydrophila subsp. hydrophila (strain ATCC 7966 / DSM 30187 / BCRC 13018 / CCUG 14551 / JCM 1027 / KCTC 2358 / NCIMB 9240 / NCTC 8049)).